The chain runs to 360 residues: Phosphoserine aminotransferase (360 aa).

R42 is a binding site for L-glutamate. Residues 76–77 (AS), W102, T152, D172, and Q195 each bind pyridoxal 5'-phosphate. K196 is modified (N6-(pyridoxal phosphate)lysine). 237-238 (NT) provides a ligand contact to pyridoxal 5'-phosphate.

This sequence belongs to the class-V pyridoxal-phosphate-dependent aminotransferase family. SerC subfamily. In terms of assembly, homodimer. It depends on pyridoxal 5'-phosphate as a cofactor.

Its subcellular location is the cytoplasm. It catalyses the reaction O-phospho-L-serine + 2-oxoglutarate = 3-phosphooxypyruvate + L-glutamate. The catalysed reaction is 4-(phosphooxy)-L-threonine + 2-oxoglutarate = (R)-3-hydroxy-2-oxo-4-phosphooxybutanoate + L-glutamate. The protein operates within amino-acid biosynthesis; L-serine biosynthesis; L-serine from 3-phospho-D-glycerate: step 2/3. Functionally, catalyzes the reversible conversion of 3-phosphohydroxypyruvate to phosphoserine and of 3-hydroxy-2-oxo-4-phosphonooxybutanoate to phosphohydroxythreonine. The sequence is that of Phosphoserine aminotransferase from Bacillus cereus (strain ZK / E33L).